Consider the following 376-residue polypeptide: Glucose-1-phosphate adenylyltransferase (376 aa).

Residues Tyr101, Gly166, 181-182 (EK), and Ser192 contribute to the alpha-D-glucose 1-phosphate site.

The protein belongs to the bacterial/plant glucose-1-phosphate adenylyltransferase family. As to quaternary structure, homotetramer.

It carries out the reaction alpha-D-glucose 1-phosphate + ATP + H(+) = ADP-alpha-D-glucose + diphosphate. It functions in the pathway glycan biosynthesis; glycogen biosynthesis. Functionally, involved in the biosynthesis of ADP-glucose, a building block required for the elongation reactions to produce glycogen. Catalyzes the reaction between ATP and alpha-D-glucose 1-phosphate (G1P) to produce pyrophosphate and ADP-Glc. The protein is Glucose-1-phosphate adenylyltransferase of Bacillus cereus (strain Q1).